A 206-amino-acid polypeptide reads, in one-letter code: ATP phosphoribosyltransferase (206 aa).

This sequence belongs to the ATP phosphoribosyltransferase family. Short subfamily. As to quaternary structure, heteromultimer composed of HisG and HisZ subunits.

It localises to the cytoplasm. It catalyses the reaction 1-(5-phospho-beta-D-ribosyl)-ATP + diphosphate = 5-phospho-alpha-D-ribose 1-diphosphate + ATP. The protein operates within amino-acid biosynthesis; L-histidine biosynthesis; L-histidine from 5-phospho-alpha-D-ribose 1-diphosphate: step 1/9. Its function is as follows. Catalyzes the condensation of ATP and 5-phosphoribose 1-diphosphate to form N'-(5'-phosphoribosyl)-ATP (PR-ATP). Has a crucial role in the pathway because the rate of histidine biosynthesis seems to be controlled primarily by regulation of HisG enzymatic activity. This is ATP phosphoribosyltransferase from Geobacillus sp. (strain WCH70).